Consider the following 120-residue polypeptide: NAD(P)H-quinone oxidoreductase subunit 3, chloroplastic (120 aa).

Helical transmembrane passes span isoleucine 9 to glycine 29, methionine 64 to methionine 84, and valine 88 to serine 108.

It belongs to the complex I subunit 3 family. In terms of assembly, NDH is composed of at least 16 different subunits, 5 of which are encoded in the nucleus.

It localises to the plastid. It is found in the chloroplast thylakoid membrane. It carries out the reaction a plastoquinone + NADH + (n+1) H(+)(in) = a plastoquinol + NAD(+) + n H(+)(out). The enzyme catalyses a plastoquinone + NADPH + (n+1) H(+)(in) = a plastoquinol + NADP(+) + n H(+)(out). NDH shuttles electrons from NAD(P)H:plastoquinone, via FMN and iron-sulfur (Fe-S) centers, to quinones in the photosynthetic chain and possibly in a chloroplast respiratory chain. The immediate electron acceptor for the enzyme in this species is believed to be plastoquinone. Couples the redox reaction to proton translocation, and thus conserves the redox energy in a proton gradient. The sequence is that of NAD(P)H-quinone oxidoreductase subunit 3, chloroplastic from Calycanthus floridus var. glaucus (Eastern sweetshrub).